Here is a 342-residue protein sequence, read N- to C-terminus: tRNA-specific 2-thiouridylase MnmA (342 aa).

Residues 6-13 (LLSGGVDS) and leucine 32 each bind ATP. Catalysis depends on cysteine 92, which acts as the Nucleophile. A disulfide bridge connects residues cysteine 92 and cysteine 191. Glycine 116 contributes to the ATP binding site. Residues 138–140 (KDQ) form an interaction with tRNA region. The Cysteine persulfide intermediate role is filled by cysteine 191. An interaction with tRNA region spans residues 293-294 (RY).

The protein belongs to the MnmA/TRMU family.

It localises to the cytoplasm. The enzyme catalyses S-sulfanyl-L-cysteinyl-[protein] + uridine(34) in tRNA + AH2 + ATP = 2-thiouridine(34) in tRNA + L-cysteinyl-[protein] + A + AMP + diphosphate + H(+). Its function is as follows. Catalyzes the 2-thiolation of uridine at the wobble position (U34) of tRNA, leading to the formation of s(2)U34. This Helicobacter pylori (strain ATCC 700392 / 26695) (Campylobacter pylori) protein is tRNA-specific 2-thiouridylase MnmA.